The following is a 438-amino-acid chain: Probable chaperone protein ClpB 1 (438 aa).

A coiled-coil region spans residues 1–94 (MNTADTRQRL…NNRKIEARQA (94 aa)). A linker region spans residues 1-118 (MNTADTRQRL…IADIVSRWTG (118 aa)). Positions 128–345 (ERQKLLGIES…RIDEVILFTP (218 aa)) are NBD2. Position 178-185 (178-185 (GPTGVGKT)) interacts with ATP. Residues 346–438 (LTRENLREIV…ENDAIVMKKK (93 aa)) form a C-terminal region.

This sequence belongs to the ClpA/ClpB family. Homohexamer. The oligomerization is ATP-dependent.

It localises to the cytoplasm. Part of a stress-induced multi-chaperone system, it is involved in the recovery of the cell from heat-induced damage, in cooperation with DnaK, DnaJ and GrpE. Acts before DnaK, in the processing of protein aggregates. Protein binding stimulates the ATPase activity; ATP hydrolysis unfolds the denatured protein aggregates, which probably helps expose new hydrophobic binding sites on the surface of ClpB-bound aggregates, contributing to the solubilization and refolding of denatured protein aggregates by DnaK. The polypeptide is Probable chaperone protein ClpB 1 (clpB1) (Chlorobaculum tepidum (strain ATCC 49652 / DSM 12025 / NBRC 103806 / TLS) (Chlorobium tepidum)).